The sequence spans 300 residues: Ribonuclease HIII (300 aa).

Positions 83–300 constitute an RNase H type-2 domain; sequence IPIIGSDEVG…THKAQALLTK (218 aa). The a divalent metal cation site is built by D89, E90, and D194.

The protein belongs to the RNase HII family. RnhC subfamily. The cofactor is Mn(2+). Mg(2+) serves as cofactor.

It localises to the cytoplasm. The catalysed reaction is Endonucleolytic cleavage to 5'-phosphomonoester.. Its function is as follows. Endonuclease that specifically degrades the RNA of RNA-DNA hybrids. The protein is Ribonuclease HIII of Streptococcus pyogenes serotype M1.